Consider the following 328-residue polypeptide: tRNA uridine(34) hydroxylase (328 aa).

The Rhodanese domain occupies 130–224; that stretch reads LDEDTVVLDT…YGKDPEVQGE (95 aa). The Cysteine persulfide intermediate role is filled by Cys-184.

Belongs to the TrhO family.

It catalyses the reaction uridine(34) in tRNA + AH2 + O2 = 5-hydroxyuridine(34) in tRNA + A + H2O. Its function is as follows. Catalyzes oxygen-dependent 5-hydroxyuridine (ho5U) modification at position 34 in tRNAs. In Streptococcus sanguinis (strain SK36), this protein is tRNA uridine(34) hydroxylase.